The sequence spans 470 residues: Cyclin-dependent kinase E-1 (470 aa).

The Protein kinase domain occupies 25–333 (YNLVGKIGEG…ASQALEHEYF (309 aa)). Residues 31-39 (IGEGTYGLV) and lysine 55 contribute to the ATP site. Residue tyrosine 36 is modified to Phosphotyrosine. Aspartate 154 functions as the Proton acceptor in the catalytic mechanism. A disordered region spans residues 428-470 (LNPSVPLQQQRGMAQPHQQQQLRRKDPGMGMSGYAPPNKSRRL). Over residues 432–448 (VPLQQQRGMAQPHQQQQ) the composition is skewed to polar residues.

Belongs to the protein kinase superfamily. CMGC Ser/Thr protein kinase family. CDC2/CDKX subfamily. As to quaternary structure, interacts with MED14, HDA19 and LUG. Interacts with KIN10. Expressed in roots, leaves and stems. Expressed in young dividing tissue, such as shoot and root tips, lateral root primordia, young leaves and flowers. Expressed in the inflorescence meristem, inflorescence stem and young flowers.

The protein resides in the nucleus. It carries out the reaction L-seryl-[protein] + ATP = O-phospho-L-seryl-[protein] + ADP + H(+). The catalysed reaction is L-threonyl-[protein] + ATP = O-phospho-L-threonyl-[protein] + ADP + H(+). It catalyses the reaction [DNA-directed RNA polymerase] + ATP = phospho-[DNA-directed RNA polymerase] + ADP + H(+). Its function is as follows. Involved in cell differentiation. Required for the specification of stamen and carpel identities and for the proper termination of stem cells in the floral meristem. In Arabidopsis thaliana (Mouse-ear cress), this protein is Cyclin-dependent kinase E-1 (CDKE-1).